Here is a 428-residue protein sequence, read N- to C-terminus: Serine--tRNA ligase (428 aa).

An L-serine-binding site is contributed by 236 to 238 (TAE). Residue 267 to 269 (RSE) participates in ATP binding. E290 serves as a coordination point for L-serine. Residue 354 to 357 (EISS) participates in ATP binding. An L-serine-binding site is contributed by S388.

The protein belongs to the class-II aminoacyl-tRNA synthetase family. Type-1 seryl-tRNA synthetase subfamily. Homodimer. The tRNA molecule binds across the dimer.

Its subcellular location is the cytoplasm. It catalyses the reaction tRNA(Ser) + L-serine + ATP = L-seryl-tRNA(Ser) + AMP + diphosphate + H(+). It carries out the reaction tRNA(Sec) + L-serine + ATP = L-seryl-tRNA(Sec) + AMP + diphosphate + H(+). It functions in the pathway aminoacyl-tRNA biosynthesis; selenocysteinyl-tRNA(Sec) biosynthesis; L-seryl-tRNA(Sec) from L-serine and tRNA(Sec): step 1/1. Catalyzes the attachment of serine to tRNA(Ser). Is also able to aminoacylate tRNA(Sec) with serine, to form the misacylated tRNA L-seryl-tRNA(Sec), which will be further converted into selenocysteinyl-tRNA(Sec). The sequence is that of Serine--tRNA ligase from Psychrobacter sp. (strain PRwf-1).